Consider the following 369-residue polypeptide: Anhydro-N-acetylmuramic acid kinase (369 aa).

ATP is bound at residue 12–19 (GTSLDGVD).

The protein belongs to the anhydro-N-acetylmuramic acid kinase family.

The catalysed reaction is 1,6-anhydro-N-acetyl-beta-muramate + ATP + H2O = N-acetyl-D-muramate 6-phosphate + ADP + H(+). It participates in amino-sugar metabolism; 1,6-anhydro-N-acetylmuramate degradation. Its pathway is cell wall biogenesis; peptidoglycan recycling. Functionally, catalyzes the specific phosphorylation of 1,6-anhydro-N-acetylmuramic acid (anhMurNAc) with the simultaneous cleavage of the 1,6-anhydro ring, generating MurNAc-6-P. Is required for the utilization of anhMurNAc either imported from the medium or derived from its own cell wall murein, and thus plays a role in cell wall recycling. In Actinobacillus pleuropneumoniae serotype 3 (strain JL03), this protein is Anhydro-N-acetylmuramic acid kinase.